The chain runs to 545 residues: Glucose-6-phosphate isomerase (545 aa).

Glutamate 351 functions as the Proton donor in the catalytic mechanism. Active-site residues include histidine 382 and lysine 510.

This sequence belongs to the GPI family.

It is found in the cytoplasm. It catalyses the reaction alpha-D-glucose 6-phosphate = beta-D-fructose 6-phosphate. Its pathway is carbohydrate biosynthesis; gluconeogenesis. It participates in carbohydrate degradation; glycolysis; D-glyceraldehyde 3-phosphate and glycerone phosphate from D-glucose: step 2/4. Catalyzes the reversible isomerization of glucose-6-phosphate to fructose-6-phosphate. In Shewanella baltica (strain OS155 / ATCC BAA-1091), this protein is Glucose-6-phosphate isomerase.